The chain runs to 385 residues: Methylthioribose-1-phosphate isomerase (385 aa).

Residue Asp256 is the Proton donor of the active site.

This sequence belongs to the eIF-2B alpha/beta/delta subunits family. MtnA subfamily.

Its subcellular location is the cytoplasm. The protein resides in the nucleus. The catalysed reaction is 5-(methylsulfanyl)-alpha-D-ribose 1-phosphate = 5-(methylsulfanyl)-D-ribulose 1-phosphate. The protein operates within amino-acid biosynthesis; L-methionine biosynthesis via salvage pathway; L-methionine from S-methyl-5-thio-alpha-D-ribose 1-phosphate: step 1/6. In terms of biological role, catalyzes the interconversion of methylthioribose-1-phosphate (MTR-1-P) into methylthioribulose-1-phosphate (MTRu-1-P). This Arthroderma otae (strain ATCC MYA-4605 / CBS 113480) (Microsporum canis) protein is Methylthioribose-1-phosphate isomerase.